The sequence spans 424 residues: Homoserine O-succinyltransferase (424 aa).

An AB hydrolase-1 domain is found at 67–381; the sequence is NAVLVCHALN…PHGHDAFLLD (315 aa). Ser173 functions as the Nucleophile in the catalytic mechanism. Arg243 provides a ligand contact to substrate. Residues Asp342 and His375 contribute to the active site. Asp376 provides a ligand contact to substrate.

This sequence belongs to the AB hydrolase superfamily. MetX family. In terms of assembly, homodimer.

The protein resides in the cytoplasm. The catalysed reaction is L-homoserine + succinyl-CoA = O-succinyl-L-homoserine + CoA. Its pathway is amino-acid biosynthesis; L-methionine biosynthesis via de novo pathway; O-succinyl-L-homoserine from L-homoserine: step 1/1. Its function is as follows. Transfers a succinyl group from succinyl-CoA to L-homoserine, forming succinyl-L-homoserine. In vitro, also has serine succinyl transferase activity. This is Homoserine O-succinyltransferase from Bordetella petrii (strain ATCC BAA-461 / DSM 12804 / CCUG 43448).